The following is a 341-amino-acid chain: Cytoplasmic tRNA 2-thiolation protein 1 (341 aa).

It belongs to the TtcA family. CTU1/NCS6/ATPBD3 subfamily.

It is found in the cytoplasm. The protein operates within tRNA modification; 5-methoxycarbonylmethyl-2-thiouridine-tRNA biosynthesis. Functionally, plays a central role in 2-thiolation of mcm(5)S(2)U at tRNA wobble positions of tRNA(Lys), tRNA(Glu) and tRNA(Gln). Directly binds tRNAs and probably acts by catalyzing adenylation of tRNAs, an intermediate required for 2-thiolation. It is unclear whether it acts as a sulfurtransferase that transfers sulfur from thiocarboxylated URM1 onto the uridine of tRNAs at wobble position. In Aedes aegypti (Yellowfever mosquito), this protein is Cytoplasmic tRNA 2-thiolation protein 1.